The sequence spans 154 residues: Ribonuclease H (154 aa).

The 142-residue stretch at 3–144 folds into the RNase H type-1 domain; sequence ELPVVSIFTD…ADQLARDGVA (142 aa). Positions 12, 50, 72, and 136 each coordinate Mg(2+).

It belongs to the RNase H family. Monomer. Requires Mg(2+) as cofactor.

It is found in the cytoplasm. The catalysed reaction is Endonucleolytic cleavage to 5'-phosphomonoester.. Its function is as follows. Endonuclease that specifically degrades the RNA of RNA-DNA hybrids. This is Ribonuclease H from Bradyrhizobium sp. (strain ORS 278).